The sequence spans 333 residues: Probable tRNA pseudouridine synthase B (333 aa).

The active-site Nucleophile is the aspartate 66. Positions 233–308 (LKKIIVKDSA…EVVEITRVIM (76 aa)) constitute a PUA domain.

It belongs to the pseudouridine synthase TruB family. Type 2 subfamily.

The enzyme catalyses uridine(55) in tRNA = pseudouridine(55) in tRNA. Its function is as follows. Could be responsible for synthesis of pseudouridine from uracil-55 in the psi GC loop of transfer RNAs. This is Probable tRNA pseudouridine synthase B from Methanococcus maripaludis (strain C5 / ATCC BAA-1333).